Consider the following 102-residue polypeptide: Putative ribosomal protein uL13-like (102 aa).

Belongs to the universal ribosomal protein uL13 family.

The polypeptide is Putative ribosomal protein uL13-like (RPL13AP3) (Homo sapiens (Human)).